A 330-amino-acid polypeptide reads, in one-letter code: G-protein coupled receptor 157 (330 aa).

Topologically, residues Met-1–Arg-15 are extracellular. Residues Ala-16–His-36 traverse the membrane as a helical segment. The Cytoplasmic segment spans residues Ala-37 to Arg-48. The chain crosses the membrane as a helical span at residues Leu-49–Leu-69. At Gln-70–Thr-87 the chain is on the extracellular side. The helical transmembrane segment at Phe-88–Ile-108 threads the bilayer. At Val-109–His-119 the chain is on the cytoplasmic side. A helical membrane pass occupies residues Leu-120–Val-140. The Extracellular segment spans residues Ser-141–Arg-166. A helical membrane pass occupies residues Val-167–Leu-187. Topologically, residues Leu-188 to Lys-227 are cytoplasmic. The chain crosses the membrane as a helical span at residues Leu-228–Leu-248. Residues Thr-249 to Pro-259 are Extracellular-facing. A helical membrane pass occupies residues Val-260–Phe-280. Residues Val-281–Thr-330 are Cytoplasmic-facing. The tract at residues Pro-301–Thr-330 is disordered. The segment covering Glu-317–Thr-330 has biased composition (basic and acidic residues).

This sequence belongs to the G-protein coupled receptor 2 family. Expressed in the primary cilia of radial glial progenitors (RGPs) in the developing neocortex.

It localises to the cell projection. The protein localises to the cilium membrane. Orphan receptor that promotes neuronal differentiation of radial glial progenitors (RGPs). The activity of this receptor is mediated by a G(q)-protein that activates a phosphatidylinositol-calcium second messenger. In Mus musculus (Mouse), this protein is G-protein coupled receptor 157 (Gpr157).